A 388-amino-acid chain; its full sequence is Chorismate synthase (388 aa).

NADP(+)-binding residues include arginine 39 and arginine 45. FMN is bound by residues 130 to 132, 251 to 252, glycine 296, 311 to 315, and arginine 337; these read RSS, NA, and KPIPT.

This sequence belongs to the chorismate synthase family. In terms of assembly, homotetramer. The cofactor is FMNH2.

The catalysed reaction is 5-O-(1-carboxyvinyl)-3-phosphoshikimate = chorismate + phosphate. Its pathway is metabolic intermediate biosynthesis; chorismate biosynthesis; chorismate from D-erythrose 4-phosphate and phosphoenolpyruvate: step 7/7. Functionally, catalyzes the anti-1,4-elimination of the C-3 phosphate and the C-6 proR hydrogen from 5-enolpyruvylshikimate-3-phosphate (EPSP) to yield chorismate, which is the branch point compound that serves as the starting substrate for the three terminal pathways of aromatic amino acid biosynthesis. This reaction introduces a second double bond into the aromatic ring system. In Streptococcus pneumoniae (strain ATCC 700669 / Spain 23F-1), this protein is Chorismate synthase.